A 337-amino-acid chain; its full sequence is MHLSLLVPFLFWITGCCTAEDPVTGPEEVSGQEQGSLTVQCRYTSGWKDYKKYWCQGVPQRSCKTLVETDASEQLVKKNRVSIRDNQRDFIFTVTMEDLRMSDAGIYWCGITKGGLDPMFKVTVNIGPAIQVPITVPTMPPITSTTTIFTVTTTVKETSMFPTLTSYYSDNGHGGGDSGGGEDGVGDGFLDLSVLLPVISAVLLLLLLVASLFAWRMVRRQKKAAGPPSEQAQSLEGDLCYADLSLKQPRTSPGSSWKKGSSMSSSGKDHQEEVEYVTMAPFPREEVSYAALTLAGLGQEPTYGNTGCPITHVPRTGLEEETTEYSSIRRPLPAAMP.

The signal sequence occupies residues 1–19 (MHLSLLVPFLFWITGCCTA). The region spanning 20-125 (EDPVTGPEEV…LDPMFKVTVN (106 aa)) is the Ig-like V-type domain. Over 20–193 (EDPVTGPEEV…GVGDGFLDLS (174 aa)) the chain is Extracellular. Residues 39-45 (VQCRYTS) form a plays an important role in murine norovirus (MNV) binding region. Disulfide bonds link cysteine 41-cysteine 109 and cysteine 55-cysteine 63. Residues 194-214 (VLLPVISAVLLLLLLVASLFA) traverse the membrane as a helical segment. At 215-337 (WRMVRRQKKA…IRRPLPAAMP (123 aa)) the chain is on the cytoplasmic side. Disordered regions lie at residues 248–270 (QPRTSPGSSWKKGSSMSSSGKDH) and 318–337 (LEEETTEYSSIRRPLPAAMP). The segment covering 252–266 (SPGSSWKKGSSMSSS) has biased composition (low complexity).

It belongs to the CD300 family. Interacts with PTPN6/SHP-1 in a tyrosine phosphorylation dependent manner. Interacts with IL4R. Phosphorylated on tyrosine. Expressed in myeloid cells. Present on the surface of macrophages (at protein level). Highly expressed by alveolar, splenic macrophages and bone marrow-derived dendritic cells. Expression is increased following aeroallergen challenge in macrophages, mast cells, and eosinophils.

The protein localises to the cell membrane. Functionally, acts as an inhibitory receptor for myeloid cells and mast cells. Positively regulates the phagocytosis of apoptotic cells (efferocytosis) via phosphatidylserine (PS) recognition; recognizes and binds PS as a ligand which is expressed on the surface of apoptotic cells. Plays an important role in the maintenance of immune homeostasis, by promoting macrophage-mediated efferocytosis and by inhibiting dendritic cell-mediated efferocytosis. Negatively regulates Fc epsilon receptor-dependent mast cell activation and allergic responses via binding to ceramide which acts as a ligand. May act as a coreceptor for interleukin 4 (IL-4). Associates with and regulates IL-4 receptor alpha-mediated responses by augmenting IL-4- and IL-13-induced signaling. Negatively regulates the Toll-like receptor (TLR) signaling mediated by MYD88 and TRIF through activation of PTPN6/SHP-1 and PTPN11/SHP-2. Inhibits osteoclast formation. Induces macrophage cell death upon engagement. (Microbial infection) Acts as a functional receptor for murine norovirus (MNV). Mediates binding to the cell surface and is both necessary and sufficient for viral entry and replication. This interaction requires Mg(2+) and Ca(2+) and is enhanced by bile acids. Primary determinant of MNV species tropism and is sufficient to render cells permissive to infection by MNV. Can render nonmurine mammalian cells susceptible to MNV infection. In Mus musculus (Mouse), this protein is CMRF35-like molecule 1 (Cd300lf).